The chain runs to 703 residues: Capsid protein VP1 (703 aa).

It belongs to the caliciviridae capsid protein family. Homodimer. Homomultimer. Interacts with the minor capsid protein VP2. May bind to VP3 and Vpg proteins. Cleaved by the viral protease to produce mature capsid protein.

The protein localises to the virion. It localises to the host cytoplasm. Functionally, capsid protein self assembles to form an icosahedral capsid with a T=3 symmetry, about 38 nm in diameter, and consisting of 180 capsid proteins. A smaller form of capsid with a diameter of 23 nm might be capsid proteins assembled as icosahedron with T=1 symmetry. The capsid encapsulates the genomic RNA and is decorated with VP2 proteins. The polypeptide is Capsid protein VP1 (San Miguel sea lion virus serotype 4 (SMSV-4)).